Consider the following 241-residue polypeptide: Small ribosomal subunit protein uS2 (241 aa).

The protein belongs to the universal ribosomal protein uS2 family.

This is Small ribosomal subunit protein uS2 from Glaesserella parasuis serovar 5 (strain SH0165) (Haemophilus parasuis).